A 294-amino-acid chain; its full sequence is Small ribosomal subunit protein uS2 (294 aa).

Residues 261 to 274 (MDEDADSKKSKAEE) show a composition bias toward basic and acidic residues. A disordered region spans residues 261 to 294 (MDEDADSKKSKAEEPVIPTAEEPAITTIEVDQNE).

Belongs to the universal ribosomal protein uS2 family.

In Leptospira borgpetersenii serovar Hardjo-bovis (strain JB197), this protein is Small ribosomal subunit protein uS2.